A 188-amino-acid polypeptide reads, in one-letter code: RWD domain-containing protein 4 (188 aa).

One can recognise an RWD domain in the interval 9–111 (MELEALRSIY…EYAKDNKEQF (103 aa)). A disordered region spans residues 132 to 167 (TPSAAPSSKKKDKKEQLSKAQKRKLADKTDHKGELP). Residues 155 to 166 (KLADKTDHKGEL) are compositionally biased toward basic and acidic residues.

The protein is RWD domain-containing protein 4 (Rwdd4) of Rattus norvegicus (Rat).